A 98-amino-acid polypeptide reads, in one-letter code: Small ribosomal subunit protein uS19 (98 aa).

Positions 77 to 98 (TRTFRGHAGGKAEKGGSAPKRK) are disordered.

The protein belongs to the universal ribosomal protein uS19 family.

Functionally, protein S19 forms a complex with S13 that binds strongly to the 16S ribosomal RNA. The polypeptide is Small ribosomal subunit protein uS19 (Chlorobium luteolum (strain DSM 273 / BCRC 81028 / 2530) (Pelodictyon luteolum)).